A 461-amino-acid chain; its full sequence is Serine/threonine-protein kinase VHS1 (461 aa).

A Protein kinase domain is found at 12–337 (YLITSQIGEG…KEVSSITSFT (326 aa)). ATP contacts are provided by residues 18-26 (IGEGAYGLV) and K41. The active-site Proton acceptor is the D185. The segment at 384–433 (LSYTSSSEEEDGIKEGIDDDNGSRSGSFGTLDTDTGLHSSFTSTSCESDN) is disordered. A compositionally biased stretch (acidic residues) spans 390 to 403 (SEEEDGIKEGIDDD). The span at 406–433 (SRSGSFGTLDTDTGLHSSFTSTSCESDN) shows a compositional bias: polar residues.

Belongs to the protein kinase superfamily. Ser/Thr protein kinase family.

Its subcellular location is the cytoplasm. The catalysed reaction is L-seryl-[protein] + ATP = O-phospho-L-seryl-[protein] + ADP + H(+). It catalyses the reaction L-threonyl-[protein] + ATP = O-phospho-L-threonyl-[protein] + ADP + H(+). Probable serine/threonine protein kinase involved in the G1-S transition. The polypeptide is Serine/threonine-protein kinase VHS1 (VHS1) (Saccharomyces cerevisiae (strain ATCC 204508 / S288c) (Baker's yeast)).